A 579-amino-acid chain; its full sequence is Probable methyl-accepting chemotaxis protein BT9727_0355 (579 aa).

Topologically, residues 1–13 are cytoplasmic; that stretch reads MKKYWHKLSFLQK. A helical membrane pass occupies residues 14-34; the sequence is NVLLTVLVILTLVGTMGALSF. The Extracellular portion of the chain corresponds to 35–198; that stretch reads NMFQNSMMSI…ASIVPSTKEK (164 aa). The chain crosses the membrane as a helical span at residues 199 to 219; the sequence is FIIQGLMFICISVLIATVIQF. At 220–579 the chain is on the cytoplasmic side; sequence LIVRNALAPL…LQELIGEFKS (360 aa). The 52-residue stretch at 223–274 folds into the HAMP domain; it reads RNALAPLRDLREGLRRVGEGDLNIKLEERSDDIGIINSYFNNTIEKFKGIID. Residue E289 is modified to Glutamate methyl ester (Glu). One can recognise a Methyl-accepting transducer domain in the interval 293-529; that stretch reads STKENSMAVQ…NIVRVVNELS (237 aa). A Glutamate methyl ester (Glu) modification is found at E548.

Belongs to the methyl-accepting chemotaxis (MCP) protein family.

The protein localises to the cell membrane. Chemotactic-signal transducers respond to changes in the concentration of attractants and repellents in the environment, transduce a signal from the outside to the inside of the cell, and facilitate sensory adaptation through the variation of the level of methylation. The protein is Probable methyl-accepting chemotaxis protein BT9727_0355 of Bacillus thuringiensis subsp. konkukian (strain 97-27).